The primary structure comprises 682 residues: Zinc finger protein 16 (682 aa).

Residues 1-10 (MPSLRTRREE) are compositionally biased toward basic and acidic residues. The segment at 1 to 38 (MPSLRTRREEAEMELSAPGPSPWTPAAQARVSDAPAVT) is disordered. A necessary for transcription activation region spans residues 62–210 (YQQPDCDTRT…GVPTAESPLI (149 aa)). The C2H2-type 1; degenerate zinc finger occupies 209-231 (LICNECGKTFRGNPDLIQRQIVH). The C2H2-type 2; degenerate zinc-finger motif lies at 237–259 (FMCDDCGKTFSQNSVLKNRHRSH). A Glycyl lysine isopeptide (Lys-Gly) (interchain with G-Cter in SUMO2) cross-link involves residue lysine 253. 8 consecutive C2H2-type zinc fingers follow at residues 265–287 (YQCS…QSHH), 293–315 (YTCT…QKSH), 321–343 (YECN…QRIH), 349–371 (YVCS…HRTH), 377–399 (FECG…QRVH), 405–427 (YECN…HRVH), 433–455 (YKCS…RRIH), and 461–483 (HVCN…QIIH). Required for nuclear localization stretches follow at residues 268–393 (SECG…AHLR) and 341–373 (RIHS…THTG). Residues 473–503 (SSVLRKHQIIHTGEKPYRCSVCGKAFSHSSA) form a required for nuclear localization region. An N6-acetyllysine modification is found at lysine 487. 7 C2H2-type zinc fingers span residues 489 to 511 (YRCS…QGVH), 517 to 539 (YACH…QRVH), 545 to 567 (YECT…QRIH), 573 to 595 (HECN…QKVH), 601 to 623 (YTCV…QIIH), 629 to 651 (YKCS…QRIH), and 657 to 679 (YDCA…QLIH).

Belongs to the krueppel C2H2-type zinc-finger protein family. As to quaternary structure, interacts with INCA1; the interaction inhibits INCA1 activity and induces the cell cycle process.

It localises to the nucleus. Acts as a transcriptional activator. Promotes cell proliferation by facilitating the cell cycle phase transition from the S to G2/M phase. Involved in both the hemin- and phorbol myristate acetate (PMA)-induced erythroid and megakaryocytic differentiation, respectively. Also plays a role as an inhibitor of cell apoptosis. In Pan troglodytes (Chimpanzee), this protein is Zinc finger protein 16 (ZNF16).